The sequence spans 250 residues: Precorrin-4 C(11)-methyltransferase (250 aa).

This sequence belongs to the precorrin methyltransferase family.

It carries out the reaction precorrin-4 + S-adenosyl-L-methionine = precorrin-5 + S-adenosyl-L-homocysteine. It participates in cofactor biosynthesis; adenosylcobalamin biosynthesis; cob(II)yrinate a,c-diamide from precorrin-2 (aerobic route): step 4/10. Catalyzes the methylation of C-11 in precorrin-4 to form precorrin-5. The polypeptide is Precorrin-4 C(11)-methyltransferase (cobM) (Pseudomonas aeruginosa (strain ATCC 15692 / DSM 22644 / CIP 104116 / JCM 14847 / LMG 12228 / 1C / PRS 101 / PAO1)).